We begin with the raw amino-acid sequence, 321 residues long: Fibronectin type III domain-containing protein 8 (321 aa).

Residues 175 to 277 (VPEVPFICEH…KPYKFATVST (103 aa)) form the Fibronectin type-III domain.

The chain is Fibronectin type III domain-containing protein 8 (Fndc8) from Mus musculus (Mouse).